The following is a 416-amino-acid chain: Esterase FrsA (416 aa).

The tract at residues 19-39 (ETSTLVRRTRHDQETQGLHST) is disordered.

This sequence belongs to the FrsA family.

The catalysed reaction is a carboxylic ester + H2O = an alcohol + a carboxylate + H(+). Functionally, catalyzes the hydrolysis of esters. The protein is Esterase FrsA of Pectobacterium atrosepticum (strain SCRI 1043 / ATCC BAA-672) (Erwinia carotovora subsp. atroseptica).